Consider the following 95-residue polypeptide: Nodulin (95 aa).

The sequence is that of Nodulin from Striga hermonthica (Purple witchweed).